The sequence spans 185 residues: Protein GrpE (185 aa).

This sequence belongs to the GrpE family. Homodimer.

Its subcellular location is the cytoplasm. Its function is as follows. Participates actively in the response to hyperosmotic and heat shock by preventing the aggregation of stress-denatured proteins, in association with DnaK and GrpE. It is the nucleotide exchange factor for DnaK and may function as a thermosensor. Unfolded proteins bind initially to DnaJ; upon interaction with the DnaJ-bound protein, DnaK hydrolyzes its bound ATP, resulting in the formation of a stable complex. GrpE releases ADP from DnaK; ATP binding to DnaK triggers the release of the substrate protein, thus completing the reaction cycle. Several rounds of ATP-dependent interactions between DnaJ, DnaK and GrpE are required for fully efficient folding. The sequence is that of Protein GrpE from Methanobrevibacter smithii (strain ATCC 35061 / DSM 861 / OCM 144 / PS).